The following is a 143-amino-acid chain: 3-hydroxyacyl-[acyl-carrier-protein] dehydratase FabZ (143 aa).

The active site involves His48.

This sequence belongs to the thioester dehydratase family. FabZ subfamily.

The protein localises to the cytoplasm. It carries out the reaction a (3R)-hydroxyacyl-[ACP] = a (2E)-enoyl-[ACP] + H2O. Functionally, involved in unsaturated fatty acids biosynthesis. Catalyzes the dehydration of short chain beta-hydroxyacyl-ACPs and long chain saturated and unsaturated beta-hydroxyacyl-ACPs. The polypeptide is 3-hydroxyacyl-[acyl-carrier-protein] dehydratase FabZ (Roseiflexus castenholzii (strain DSM 13941 / HLO8)).